The chain runs to 162 residues: Cytochrome c-type biogenesis protein CcmE (162 aa).

Residues 1–8 (MNPRRKKR) lie on the Cytoplasmic side of the membrane. A helical; Signal-anchor for type II membrane protein transmembrane segment spans residues 9 to 29 (LTLAVALIGGVAAIASLLLYA). The Periplasmic segment spans residues 30-162 (LNSNLNLFYT…YSQQKAPDTK (133 aa)). The heme site is built by H131 and Y135. A disordered region spans residues 139–162 (EVAEAMGQKHEKLDYSQQKAPDTK). Polar residues predominate over residues 153–162 (YSQQKAPDTK).

The protein belongs to the CcmE/CycJ family.

Its subcellular location is the cell inner membrane. Functionally, heme chaperone required for the biogenesis of c-type cytochromes. Transiently binds heme delivered by CcmC and transfers the heme to apo-cytochromes in a process facilitated by CcmF and CcmH. In Shewanella putrefaciens (strain CN-32 / ATCC BAA-453), this protein is Cytochrome c-type biogenesis protein CcmE.